A 156-amino-acid polypeptide reads, in one-letter code: Guanine deaminase (156 aa).

Residues 1 to 132 form the CMP/dCMP-type deaminase domain; that stretch reads MNHETFLKRA…KPAEERTIPF (132 aa). His53 contacts Zn(2+). The active-site Proton donor is the Glu55. The Zn(2+) site is built by Cys83 and Cys86.

Belongs to the cytidine and deoxycytidylate deaminase family. Requires Zn(2+) as cofactor.

The enzyme catalyses guanine + H2O + H(+) = xanthine + NH4(+). It participates in purine metabolism; guanine degradation; xanthine from guanine: step 1/1. Its function is as follows. Catalyzes the hydrolytic deamination of guanine, producing xanthine and ammonia. The protein is Guanine deaminase (guaD) of Bacillus subtilis (strain 168).